Consider the following 539-residue polypeptide: Prolyl 4-hydroxylase subunit alpha-2 (539 aa).

The first 16 residues, 1–16 (MRAVLLVCLLAGLAHA), serve as a signal peptide directing secretion. An N-linked (GlcNAc...) asparagine glycan is attached at Asn-110. The 109-residue stretch at 401 to 509 (TSEELQVANY…KWVSNKWIHE (109 aa)) folds into the Fe2OG dioxygenase domain. 3 residues coordinate Fe cation: His-419, Asp-421, and His-490. Lys-500 serves as a coordination point for 2-oxoglutarate.

The protein belongs to the P4HA family. As to quaternary structure, heterotetramer of two alpha chains and two beta chains. Exist either as a phy-2(2)/pdi-2(2) tetramer or as a phy-1/phy-2/pdi-2(2) tetramer. The cofactor is Fe(2+). It depends on L-ascorbate as a cofactor.

It is found in the endoplasmic reticulum lumen. It carries out the reaction L-prolyl-[collagen] + 2-oxoglutarate + O2 = trans-4-hydroxy-L-prolyl-[collagen] + succinate + CO2. Functionally, catalyzes the post-translational formation of 4-hydroxyproline in -Xaa-Pro-Gly- sequences in collagens and other proteins. In Caenorhabditis elegans, this protein is Prolyl 4-hydroxylase subunit alpha-2 (phy-2).